Consider the following 396-residue polypeptide: Large ribosomal subunit protein uL4A (396 aa).

Positions 352–373 are enriched in basic and acidic residues; it reads KAKEKKPDDGKPKAKKPLDAKT. Residues 352–374 form a disordered region; that stretch reads KAKEKKPDDGKPKAKKPLDAKTK.

It belongs to the universal ribosomal protein uL4 family. In terms of assembly, component of the large ribosomal subunit.

The protein resides in the cytoplasm. Component of the large ribosomal subunit. The ribosome is a large ribonucleoprotein complex responsible for the synthesis of proteins in the cell. The polypeptide is Large ribosomal subunit protein uL4A (rpl4-a) (Xenopus laevis (African clawed frog)).